The following is a 117-amino-acid chain: Gamma-aminobutyric acid receptor-associated protein-like 1 (117 aa).

G116 is lipidated: Phosphatidylethanolamine amidated glycine; alternate. G116 is lipidated: Phosphatidylserine amidated glycine; alternate. Residue K117 is a propeptide, removed in mature form.

Belongs to the ATG8 family. As to quaternary structure, interacts with ATG13, OPRK1, RB1CC1 and ULK1. Interacts with TP53INP1 and TP53INP2. Directly interacts with SQSTM1. Interacts with ATG3, ATG7 and MAP15. Interacts with TECPR2. Interacts with TBC1D5. Interacts with MAPK15. Interacts with TRIM5. Interacts with MEFV and TRIM21. Interacts with WDFY3. Interacts with the reticulophagy receptor TEX264. Interacts with UBA5. Interacts with KBTBD6 and KBTBD7; the interaction is direct. Interacts with reticulophagy regulators RETREG1, RETREG2 and RETREG3. Interacts with IRGM. Interacts with DNM2. Interacts with NCOA4 (via C-terminus). In terms of processing, the precursor molecule is cleaved by ATG4 (ATG4A, ATG4B, ATG4C or ATG4D) to expose the glycine at the C-terminus and form the cytosolic form, GABARAPL1-I. The processed form is then activated by APG7L/ATG7, transferred to ATG3 and conjugated to phosphatidylethanolamine (PE) phospholipid to form the membrane-bound form, GABARAPL1-II. During non-canonical autophagy, the processed form is conjugated to phosphatidylserine (PS) phospholipid. ATG4 proteins also mediate the delipidation of PE-conjugated forms required for GABARAPL1 recycling when autophagosomes fuse with lysosomes. In addition, ATG4B and ATG4D mediate delipidation of ATG8 proteins conjugated to PS during non-canonical autophagy. ATG4B constitutes the major protein for proteolytic activation. ATG4D is the main enzyme for delipidation activity.

It localises to the cytoplasmic vesicle. Its subcellular location is the autophagosome. The protein localises to the cytoplasmic vesicle membrane. The protein resides in the cytoplasm. It is found in the cytoskeleton. It localises to the endoplasmic reticulum. Its subcellular location is the golgi apparatus. Ubiquitin-like modifier that increases cell-surface expression of kappa-type opioid receptor through facilitating anterograde intracellular trafficking of the receptor. Involved in formation of autophagosomal vacuoles. While LC3s are involved in elongation of the phagophore membrane, the GABARAP/GATE-16 subfamily is essential for a later stage in autophagosome maturation. Through its interaction with the reticulophagy receptor TEX264, participates in the remodeling of subdomains of the endoplasmic reticulum into autophagosomes upon nutrient stress, which then fuse with lysosomes for endoplasmic reticulum turnover. The chain is Gamma-aminobutyric acid receptor-associated protein-like 1 from Bos taurus (Bovine).